The following is a 229-amino-acid chain: Glutathione S-transferase 1 (229 aa).

The 85-residue stretch at 2 to 86 (AQFTLWSHAH…YLADKYDTER (85 aa)) folds into the GST N-terminal domain. A GST C-terminal domain is found at 93-229 (DHPEYYKVIQ…FEERSKALDN (137 aa)).

Belongs to the GST superfamily.

The catalysed reaction is RX + glutathione = an S-substituted glutathione + a halide anion + H(+). Functionally, involved in the oxidative stress response and detoxification. The polypeptide is Glutathione S-transferase 1 (gst1) (Schizosaccharomyces pombe (strain 972 / ATCC 24843) (Fission yeast)).